The sequence spans 319 residues: Histidinol-phosphate aminotransferase 1 (319 aa).

At Lys-182 the chain carries N6-(pyridoxal phosphate)lysine.

This sequence belongs to the class-II pyridoxal-phosphate-dependent aminotransferase family. Histidinol-phosphate aminotransferase subfamily. The cofactor is pyridoxal 5'-phosphate.

The enzyme catalyses L-histidinol phosphate + 2-oxoglutarate = 3-(imidazol-4-yl)-2-oxopropyl phosphate + L-glutamate. It functions in the pathway amino-acid biosynthesis; L-histidine biosynthesis; L-histidine from 5-phospho-alpha-D-ribose 1-diphosphate: step 7/9. This is Histidinol-phosphate aminotransferase 1 (hisC1) from Archaeoglobus fulgidus (strain ATCC 49558 / DSM 4304 / JCM 9628 / NBRC 100126 / VC-16).